A 463-amino-acid chain; its full sequence is Mitochondrial dynamics protein MID49 (463 aa).

Over 1-24 (MAELQIRKKEKKSGDGIGTMVDFL) the chain is Mitochondrial intermembrane. A helical membrane pass occupies residues 25 to 47 (LANARLVLGVGGAAMLGIATLAV). Residues 48–463 (KRLIDRATSP…EPDDVLKRER (416 aa)) lie on the Cytoplasmic side of the membrane. The interval 87-119 (TLRRKEDLEHHCAPLSLPDPSQKMPEATGTSQV) is disordered. Over residues 89–98 (RRKEDLEHHC) the composition is skewed to basic and acidic residues.

Belongs to the MID49/MID51 family.

The protein resides in the mitochondrion outer membrane. Its function is as follows. Mitochondrial outer membrane protein which regulates mitochondrial organization. It is required for mitochondrial fission and promotes the recruitment and association of the fission mediator dynamin-related protein 1 (DNM1L) to the mitochondrial surface independently of the mitochondrial fission FIS1 and MFF proteins. Regulates DNM1L GTPase activity. This is Mitochondrial dynamics protein MID49 (mief2) from Xenopus laevis (African clawed frog).